The following is a 446-amino-acid chain: Oxysterols receptor LXR-beta (446 aa).

The segment at 1-69 (MSSPTSSLDT…PERKRKKGPA (69 aa)) is disordered. The tract at residues 1–76 (MSSPTSSLDT…GPAPKMLGHE (76 aa)) is transactivation AF-1; required for ligand-independent transactivation function. The segment covering 17 to 28 (SPQPSTSATSPT) has biased composition (low complexity). Positions 75–152 (HELCRVCGDK…AGMREQCVLS (78 aa)) form a DNA-binding region, nuclear receptor. NR C4-type zinc fingers lie at residues 78-98 (CRVCGDKASGFHYNVLSCEGC) and 116-140 (CRGSGTCQMDAFMRRKCQLCRLRKC). Positions 159 to 201 (KRIQKQQQQQPPPPSEPAASSSGRPAASPGTSEASSQGSGEGE) are disordered. Positions 175-196 (PAASSSGRPAASPGTSEASSQG) are enriched in low complexity. Positions 205–446 (LTAAQELMIQ…LLSEIWDVHE (242 aa)) are transactivation AF-2; required for ligand-dependent transactivation function; mediates interaction with CCAR2. An NR LBD domain is found at 208-446 (AQELMIQQLV…LLSEIWDVHE (239 aa)). Glycyl lysine isopeptide (Lys-Gly) (interchain with G-Cter in SUMO2) cross-links involve residues K395 and K433.

The protein belongs to the nuclear hormone receptor family. NR1 subfamily. As to quaternary structure, forms a heterodimer with RXR. Interacts with CCAR2 (via N-terminus) in a ligand-independent manner. Interacts (when sumoylated) with GPS2; interaction with GPS2 onto hepatic acute phase protein promoters prevents N-Cor corepressor complex dissociation. Interacts with ABCA12 and ABCA1; this interaction is required for ABCA1 localization to the cell surface and is necessary for its normal activity and stability. Sumoylated by SUMO2 at Lys-395 and Lys-433 during the hepatic acute phase response, leading to promote interaction with GPS2 and prevent N-Cor corepressor complex dissociation. Ubiquitous.

The protein localises to the nucleus. Its function is as follows. Nuclear receptor that exhibits a ligand-dependent transcriptional activation activity. Binds preferentially to double-stranded oligonucleotide direct repeats having the consensus half-site sequence 5'-AGGTCA-3' and 4-nt spacing (DR-4). Regulates cholesterol uptake through MYLIP-dependent ubiquitination of LDLR, VLDLR and LRP8; DLDLR and LRP8. Interplays functionally with RORA for the regulation of genes involved in liver metabolism. Induces LPCAT3-dependent phospholipid remodeling in endoplasmic reticulum (ER) membranes of hepatocytes, driving SREBF1 processing and lipogenesis. Via LPCAT3, triggers the incorporation of arachidonate into phosphatidylcholines of ER membranes, increasing membrane dynamics and enabling triacylglycerols transfer to nascent very low-density lipoprotein (VLDL) particles. Via LPCAT3 also counteracts lipid-induced ER stress response and inflammation, likely by modulating SRC kinase membrane compartmentalization and limiting the synthesis of lipid inflammatory mediators. Plays an anti-inflammatory role during the hepatic acute phase response by acting as a corepressor: inhibits the hepatic acute phase response by preventing dissociation of the N-Cor corepressor complex. The polypeptide is Oxysterols receptor LXR-beta (Nr1h2) (Mus musculus (Mouse)).